The chain runs to 195 residues: Interferon tau-5 (195 aa).

Positions 1–23 are cleaved as a signal peptide; sequence MAFVLSLLMALVLVSYGPGGSLG. Cystine bridges form between Cys-24–Cys-122 and Cys-52–Cys-162.

It belongs to the alpha/beta interferon family. IFN-alphaII subfamily. Constitutively and exclusively expressed in the mononuclear cells of the extraembryonic trophectoderm.

The protein localises to the secreted. In terms of biological role, paracrine hormone primarily responsible for maternal recognition of pregnancy. Interacts with endometrial receptors, probably type I interferon receptors, and blocks estrogen receptor expression, preventing the estrogen-induced increase in oxytocin receptor expression in the endometrium. This results in the suppression of the pulsatile endometrial release of the luteolytic hormone prostaglandin F2-alpha, hindering the regression of the corpus luteum (luteolysis) and therefore a return to ovarian cyclicity. This, and a possible direct effect of IFN-tau on prostaglandin synthesis, leads in turn to continued ovarian progesterone secretion, which stimulates the secretion by the endometrium of the nutrients required for the growth of the conceptus. In summary, displays particularly high antiviral and antiproliferative potency concurrently with particular weak cytotoxicity, high antiluteolytic activity and immunomodulatory properties. In contrast with other IFNs, IFN-tau is not virally inducible. The sequence is that of Interferon tau-5 (IFNT5) from Ovis aries (Sheep).